The sequence spans 233 residues: Glucosamine-6-phosphate deaminase (233 aa).

The active-site Proton acceptor; for enolization step is aspartate 62. Asparagine 128 serves as the catalytic For ring-opening step. Catalysis depends on histidine 130, which acts as the Proton acceptor; for ring-opening step. Catalysis depends on glutamate 135, which acts as the For ring-opening step.

This sequence belongs to the glucosamine/galactosamine-6-phosphate isomerase family. NagB subfamily.

The enzyme catalyses alpha-D-glucosamine 6-phosphate + H2O = beta-D-fructose 6-phosphate + NH4(+). The protein operates within amino-sugar metabolism; N-acetylneuraminate degradation; D-fructose 6-phosphate from N-acetylneuraminate: step 5/5. Its function is as follows. Catalyzes the reversible isomerization-deamination of glucosamine 6-phosphate (GlcN6P) to form fructose 6-phosphate (Fru6P) and ammonium ion. The chain is Glucosamine-6-phosphate deaminase from Streptococcus agalactiae serotype Ia (strain ATCC 27591 / A909 / CDC SS700).